Here is an 891-residue protein sequence, read N- to C-terminus: Protein translocase subunit SecA 1 (891 aa).

Residues Q86, 104-108 (GEGKT), and D493 each bind ATP. Positions 845–873 (KQVAKPIEASHGDGNRKKAPVVKEKEAGR) are enriched in basic and acidic residues. A disordered region spans residues 845 to 891 (KQVAKPIEASHGDGNRKKAPVVKEKEAGRNDPCPCGSGKKYKKCCGE). Zn(2+) is bound by residues C877, C879, C888, and C889.

This sequence belongs to the SecA family. Monomer and homodimer. Part of the essential Sec protein translocation apparatus which comprises SecA, SecYEG and auxiliary proteins SecDF. Other proteins may also be involved. It depends on Zn(2+) as a cofactor.

The protein localises to the cell membrane. It localises to the cytoplasm. It catalyses the reaction ATP + H2O + cellular proteinSide 1 = ADP + phosphate + cellular proteinSide 2.. Part of the Sec protein translocase complex. Interacts with the SecYEG preprotein conducting channel. Has a central role in coupling the hydrolysis of ATP to the transfer of proteins into and across the cell membrane, serving as an ATP-driven molecular motor driving the stepwise translocation of polypeptide chains across the membrane. This chain is Protein translocase subunit SecA 1, found in Alkaliphilus metalliredigens (strain QYMF).